Consider the following 475-residue polypeptide: UDP-glycosyltransferase 101 (475 aa).

Catalysis depends on His15, which acts as the Proton acceptor. His15 lines the an anthocyanidin pocket. Asp117 acts as the Charge relay in catalysis. Ala345, Gln347, His362, Trp365, Asn366, Ser367, and Glu370 together coordinate UDP-alpha-D-glucose. Gly385 lines the an anthocyanidin pocket. UDP-alpha-D-glucose contacts are provided by Glu386 and Gln387.

This sequence belongs to the UDP-glycosyltransferase family.

It catalyses the reaction (20S)-protopanaxadiol + UDP-alpha-D-glucose = (20S)-ginsenoside C-K + UDP + H(+). It carries out the reaction (20S)-ginsenoside Rg3 + UDP-alpha-D-glucose = (20S)-ginsenoside Rd + UDP + H(+). The catalysed reaction is (20S)-protopanaxatriol + UDP-alpha-D-glucose = (20S)-ginsenoside F1 + UDP + H(+). The enzyme catalyses (20S)-ginsenoside F1 + UDP-alpha-D-glucose = (20S)-ginsenoside Rg1 + UDP + H(+). It participates in secondary metabolite biosynthesis; terpenoid biosynthesis. Its function is as follows. Component of the dammarane-type triterpene saponins (e.g. ginsenosides or panaxosides) biosynthetic pathway. Glycosyltransferase that catalyzes the biosynthesis of ginsenoside F1 from protopanaxatriol (PPT) and the conversion of ginsenoside F1 to ginsenoside Rg1. Triggers C20-OH glycosylation of ginsenoside Rg3 to produce ginsenoside Rd. Mediates the conversion of protopanaxadiol (PPD) to the ginsenoside compound K. The sequence is that of UDP-glycosyltransferase 101 from Panax ginseng (Korean ginseng).